Consider the following 428-residue polypeptide: 3-phosphoshikimate 1-carboxyvinyltransferase (428 aa).

Positions 22, 23, and 27 each coordinate 3-phosphoshikimate. Lysine 22 is a binding site for phosphoenolpyruvate. Residues glycine 96 and arginine 124 each contribute to the phosphoenolpyruvate site. 3-phosphoshikimate contacts are provided by serine 170, serine 171, glutamine 172, serine 198, aspartate 314, asparagine 337, and lysine 341. Glutamine 172 serves as a coordination point for phosphoenolpyruvate. Aspartate 314 (proton acceptor) is an active-site residue. Arginine 345, arginine 387, and lysine 412 together coordinate phosphoenolpyruvate.

It belongs to the EPSP synthase family. In terms of assembly, monomer.

The protein localises to the cytoplasm. It catalyses the reaction 3-phosphoshikimate + phosphoenolpyruvate = 5-O-(1-carboxyvinyl)-3-phosphoshikimate + phosphate. Its pathway is metabolic intermediate biosynthesis; chorismate biosynthesis; chorismate from D-erythrose 4-phosphate and phosphoenolpyruvate: step 6/7. Functionally, catalyzes the transfer of the enolpyruvyl moiety of phosphoenolpyruvate (PEP) to the 5-hydroxyl of shikimate-3-phosphate (S3P) to produce enolpyruvyl shikimate-3-phosphate and inorganic phosphate. This is 3-phosphoshikimate 1-carboxyvinyltransferase from Photobacterium profundum (strain SS9).